We begin with the raw amino-acid sequence, 215 residues long: Cytochrome b6 (215 aa).

The chain crosses the membrane as a helical span at residues Ile-32–Phe-52. Heme c is bound at residue Cys-35. Residues His-86 and His-100 each contribute to the heme b site. 3 consecutive transmembrane segments (helical) span residues Ala-90 to Phe-110, Leu-116 to Tyr-136, and Leu-186 to Ile-206. His-187 and His-202 together coordinate heme b.

Belongs to the cytochrome b family. PetB subfamily. As to quaternary structure, the 4 large subunits of the cytochrome b6-f complex are cytochrome b6, subunit IV (17 kDa polypeptide, PetD), cytochrome f and the Rieske protein, while the 4 small subunits are PetG, PetL, PetM and PetN. The complex functions as a dimer. The cofactor is heme b. Requires heme c as cofactor.

The protein resides in the plastid. It localises to the chloroplast thylakoid membrane. In terms of biological role, component of the cytochrome b6-f complex, which mediates electron transfer between photosystem II (PSII) and photosystem I (PSI), cyclic electron flow around PSI, and state transitions. The protein is Cytochrome b6 of Adiantum capillus-veneris (Maidenhair fern).